The primary structure comprises 187 residues: ATP synthase subunit b 2 (187 aa).

A helical membrane pass occupies residues Ser39 to Pro61.

This sequence belongs to the ATPase B chain family. F-type ATPases have 2 components, F(1) - the catalytic core - and F(0) - the membrane proton channel. F(1) has five subunits: alpha(3), beta(3), gamma(1), delta(1), epsilon(1). F(0) has three main subunits: a(1), b(2) and c(10-14). The alpha and beta chains form an alternating ring which encloses part of the gamma chain. F(1) is attached to F(0) by a central stalk formed by the gamma and epsilon chains, while a peripheral stalk is formed by the delta and b chains.

The protein localises to the cell inner membrane. In terms of biological role, f(1)F(0) ATP synthase produces ATP from ADP in the presence of a proton or sodium gradient. F-type ATPases consist of two structural domains, F(1) containing the extramembraneous catalytic core and F(0) containing the membrane proton channel, linked together by a central stalk and a peripheral stalk. During catalysis, ATP synthesis in the catalytic domain of F(1) is coupled via a rotary mechanism of the central stalk subunits to proton translocation. Component of the F(0) channel, it forms part of the peripheral stalk, linking F(1) to F(0). The chain is ATP synthase subunit b 2 from Parvibaculum lavamentivorans (strain DS-1 / DSM 13023 / NCIMB 13966).